We begin with the raw amino-acid sequence, 224 residues long: UPF0173 metal-dependent hydrolase STH3160 (224 aa).

It belongs to the UPF0173 family.

The chain is UPF0173 metal-dependent hydrolase STH3160 from Symbiobacterium thermophilum (strain DSM 24528 / JCM 14929 / IAM 14863 / T).